We begin with the raw amino-acid sequence, 23 residues long: Retinol-binding protein 3 (23 aa).

It localises to the secreted. The protein localises to the extracellular space. The protein resides in the extracellular matrix. It is found in the interphotoreceptor matrix. In terms of biological role, IRBP shuttles 11-cis and all trans retinoids between the retinol isomerase in the pigment epithelium and the visual pigments in the photoreceptor cells of the retina. The chain is Retinol-binding protein 3 (RBP3) from Oryctolagus cuniculus (Rabbit).